A 389-amino-acid polypeptide reads, in one-letter code: Lipid-A-disaccharide synthase (389 aa).

The protein belongs to the LpxB family.

It carries out the reaction a lipid X + a UDP-2-N,3-O-bis[(3R)-3-hydroxyacyl]-alpha-D-glucosamine = a lipid A disaccharide + UDP + H(+). Its pathway is bacterial outer membrane biogenesis; LPS lipid A biosynthesis. Condensation of UDP-2,3-diacylglucosamine and 2,3-diacylglucosamine-1-phosphate to form lipid A disaccharide, a precursor of lipid A, a phosphorylated glycolipid that anchors the lipopolysaccharide to the outer membrane of the cell. This chain is Lipid-A-disaccharide synthase, found in Burkholderia cenocepacia (strain HI2424).